Here is a 295-residue protein sequence, read N- to C-terminus: Spermatogenesis-associated protein 4 (295 aa).

The disordered stretch occupies residues 1-34 (MAAAGQAEECLPLPAAESSKTSLPTPPAVPAGKK). The 107-residue stretch at 48–154 (SRLSRSVLRW…QEIYTLLTHQ (107 aa)) folds into the Calponin-homology (CH) domain. The disordered stretch occupies residues 251-295 (KRRYKSRGSKEKAAQPLSKSDNDGNARKEIHVKQSGNPCENTENL). Positions 270–282 (SDNDGNARKEIHV) are enriched in basic and acidic residues. The segment covering 284 to 295 (QSGNPCENTENL) has biased composition (polar residues).

As to expression, testis.

The protein localises to the nucleus. Its function is as follows. May play a role in apoptosis regulation. The chain is Spermatogenesis-associated protein 4 (Spata4) from Mus musculus (Mouse).